The chain runs to 376 residues: N-acetyldiaminopimelate deacetylase (376 aa).

Residue D69 is part of the active site. E128 acts as the Proton acceptor in catalysis.

The protein belongs to the peptidase M20A family. N-acetyldiaminopimelate deacetylase subfamily.

It catalyses the reaction N-acetyl-(2S,6S)-2,6-diaminopimelate + H2O = (2S,6S)-2,6-diaminopimelate + acetate. It participates in amino-acid biosynthesis; L-lysine biosynthesis via DAP pathway; LL-2,6-diaminopimelate from (S)-tetrahydrodipicolinate (acetylase route): step 3/3. In terms of biological role, catalyzes the conversion of N-acetyl-diaminopimelate to diaminopimelate and acetate. The protein is N-acetyldiaminopimelate deacetylase of Streptococcus pneumoniae (strain 70585).